A 622-amino-acid chain; its full sequence is Carbon monoxide dehydrogenase (622 aa).

5 residues coordinate [4Fe-4S] cluster: Cys40, Cys49, Cys52, Cys57, and Cys68. Residues His256, Cys334, Cys442, Cys473, and Cys514 each coordinate [Ni-4Fe-5S] cluster.

The protein belongs to the Ni-containing carbon monoxide dehydrogenase family. Homodimer. [4Fe-4S] cluster serves as cofactor. The cofactor is [Ni-4Fe-5S] cluster.

It carries out the reaction CO + 2 oxidized [2Fe-2S]-[ferredoxin] + H2O = 2 reduced [2Fe-2S]-[ferredoxin] + CO2 + 2 H(+). CODH oxidizes carbon monoxide coupled, via CooF, to the reduction of a hydrogen cation by a hydrogenase (possibly CooH). This Archaeoglobus fulgidus (strain ATCC 49558 / DSM 4304 / JCM 9628 / NBRC 100126 / VC-16) protein is Carbon monoxide dehydrogenase (cooS).